A 290-amino-acid chain; its full sequence is ATP synthase gamma chain (290 aa).

Belongs to the ATPase gamma chain family. F-type ATPases have 2 components, CF(1) - the catalytic core - and CF(0) - the membrane proton channel. CF(1) has five subunits: alpha(3), beta(3), gamma(1), delta(1), epsilon(1). CF(0) has three main subunits: a, b and c.

The protein localises to the cell membrane. Its function is as follows. Produces ATP from ADP in the presence of a proton gradient across the membrane. The gamma chain is believed to be important in regulating ATPase activity and the flow of protons through the CF(0) complex. The sequence is that of ATP synthase gamma chain from Chloroflexus aurantiacus (strain ATCC 29366 / DSM 635 / J-10-fl).